The primary structure comprises 186 residues: ADP-ribosylation factor-like protein 6 (186 aa).

Gly-2 carries the N-myristoyl glycine lipid modification. Residues 24 to 31 (GLDNSGKT), Thr-50, 69 to 73 (DMSGQ), Gly-72, 130 to 133 (NKMD), and Ala-164 contribute to the GTP site. Residue Thr-50 participates in Mg(2+) binding.

The protein belongs to the small GTPase superfamily. Arf family. As to quaternary structure, interacts with SEC61B, ARL6IP1, ARL6IP2, ARL6IP3, ARL6IP4 ARL6IP5 and ARL6IP6. Interacts (GTP-bound form) with the BBSome a complex that contains BBS1, BBS2, BBS4, BBS5, BBS7, BBS8/TTC8, BBS9 and BBIP10. Interacts (GTP-free form) with IFT27.

It is found in the cell projection. Its subcellular location is the cilium membrane. It localises to the cytoplasm. The protein localises to the cytoskeleton. The protein resides in the cilium axoneme. It is found in the cilium basal body. Its function is as follows. Involved in membrane protein trafficking at the base of the ciliary organelle. Mediates recruitment onto plasma membrane of the BBSome complex which would constitute a coat complex required for sorting of specific membrane proteins to the primary cilia. Together with the BBSome complex and LTZL1, controls SMO ciliary trafficking and contributes to the sonic hedgehog (SHH) pathway regulation. May regulate cilia assembly and disassembly and subsequent ciliary signaling events such as the Wnt signaling cascade. Isoform 2 may be required for proper retinal function and organization. The polypeptide is ADP-ribosylation factor-like protein 6 (ARL6) (Pongo abelii (Sumatran orangutan)).